A 478-amino-acid chain; its full sequence is Cytochrome c-552 (478 aa).

Positions 1–26 (MTRIKINARRIFSLLIPFFFFTSVHA) are cleaved as a signal peptide. Heme c is bound at residue histidine 94. Residues cysteine 122, cysteine 125, and lysine 126 each contribute to the heme site. Residues cysteine 160, cysteine 163, histidine 164, cysteine 209, cysteine 212, and histidine 213 each contribute to the heme c site. Ca(2+) contacts are provided by glutamate 215, tyrosine 216, lysine 261, and glutamine 263. Tyrosine 216 lines the substrate pocket. Substrate is bound at residue histidine 264. Histidine 275, cysteine 282, cysteine 285, histidine 286, histidine 301, cysteine 314, cysteine 317, histidine 318, and histidine 393 together coordinate heme c.

This sequence belongs to the cytochrome c-552 family. The cofactor is Ca(2+). Heme c serves as cofactor.

It is found in the periplasm. The enzyme catalyses 6 Fe(III)-[cytochrome c] + NH4(+) + 2 H2O = 6 Fe(II)-[cytochrome c] + nitrite + 8 H(+). It functions in the pathway nitrogen metabolism; nitrate reduction (assimilation). Catalyzes the reduction of nitrite to ammonia, consuming six electrons in the process. This chain is Cytochrome c-552, found in Escherichia coli O157:H7 (strain EC4115 / EHEC).